The sequence spans 438 residues: Ornithine aminotransferase car2 (438 aa).

Lys275 is modified (N6-(pyridoxal phosphate)lysine).

The protein belongs to the class-III pyridoxal-phosphate-dependent aminotransferase family. Pyridoxal 5'-phosphate serves as cofactor.

Its subcellular location is the cytoplasm. It localises to the nucleus. The catalysed reaction is a 2-oxocarboxylate + L-ornithine = L-glutamate 5-semialdehyde + an L-alpha-amino acid. It functions in the pathway amino-acid biosynthesis; L-proline biosynthesis; L-glutamate 5-semialdehyde from L-ornithine: step 1/1. The protein is Ornithine aminotransferase car2 (car2) of Schizosaccharomyces pombe (strain 972 / ATCC 24843) (Fission yeast).